The primary structure comprises 239 residues: Uridylate kinase (239 aa).

Residue 13–16 coordinates ATP; sequence KVSG. Gly55 is a UMP binding site. Residues Gly56 and Arg60 each contribute to the ATP site. Residues Asp75 and 136 to 143 contribute to the UMP site; that span reads TGNPFCTT. Residues Thr163, Gln164, Tyr169, and Asp172 each coordinate ATP.

The protein belongs to the UMP kinase family. As to quaternary structure, homohexamer.

The protein localises to the cytoplasm. It carries out the reaction UMP + ATP = UDP + ADP. It functions in the pathway pyrimidine metabolism; CTP biosynthesis via de novo pathway; UDP from UMP (UMPK route): step 1/1. With respect to regulation, inhibited by UTP. Functionally, catalyzes the reversible phosphorylation of UMP to UDP. In Rickettsia bellii (strain RML369-C), this protein is Uridylate kinase.